We begin with the raw amino-acid sequence, 178 residues long: CRISPR system ring nuclease SSO2081 (178 aa).

The interval 105 to 106 (RK) is transition state stabilizer.

It belongs to the cOA ring nuclease family. In terms of assembly, homodimer. Requires Does not require a metal cofactor. as cofactor.

It localises to the cytoplasm. The catalysed reaction is cyclic tetraadenylate = 2 5'-hydroxy-diadenylate 2',3'-cylic phosphate. In terms of biological role, CRISPR (clustered regularly interspaced short palindromic repeat) is an adaptive immune system that provides protection against mobile genetic elements (viruses, transposable elements and conjugative plasmids). CRISPR clusters contain spacers, sequences complementary to antecedent mobile elements, and target invading nucleic acids. CRISPR clusters are transcribed and processed into CRISPR RNA (crRNA). A nuclease that degrades cyclic oligoadenylates (cOA), second messengers that induce an antiviral state important for defense against invading nucleic acids. Destruction of cOA deactivates the Csx1 ribonuclease, preventing uncontrolled degradation of cellular RNA. Degrades cA4 (a tetraadenylate ring) into a linear diadenylate product with 5'-OH and 2',3'-cyclic phosphate termini. Is 10-fold more active than SSO1393, suggesting this is the major cA4 degradation enzyme. Is highly specific for cA4; it has very poor activity on cA6 and no discernible activity against a number of cyclic dinucleotides. There may be 2 active sites per homodimer. This is CRISPR system ring nuclease SSO2081 from Saccharolobus solfataricus (strain ATCC 35092 / DSM 1617 / JCM 11322 / P2) (Sulfolobus solfataricus).